We begin with the raw amino-acid sequence, 467 residues long: Mothers against decapentaplegic homolog 2 (467 aa).

Ser2 is subject to N-acetylserine. Position 8 is a phosphothreonine (Thr8). One can recognise an MH1 domain in the interval Pro10 to Pro176. The residue at position 19 (Lys19) is an N6-acetyllysine. Residues Cys74, Cys149, Cys161, and His166 each contribute to the Zn(2+) site. Polar residues predominate over residues Pro207–Ile217. Positions Pro207–Pro251 are disordered. At Thr220 the chain carries Phosphothreonine. The short motif at Pro221–Tyr225 is the PY-motif element. The span at Ser233–Thr243 shows a compositional bias: polar residues. The residue at position 240 (Ser240) is a Phosphoserine; by CAMK2. 6 positions are modified to phosphoserine: Ser245, Ser250, Ser255, Ser458, Ser460, and Ser464. The MH2 domain occupies Trp274–Ser467. 2 positions are modified to phosphoserine; by TGFBR1: Ser465 and Ser467.

Belongs to the dwarfin/SMAD family. In terms of assembly, monomer; in the absence of TGF-beta. Heterodimer; in the presence of TGF-beta. Forms a heterodimer with co-SMAD, SMAD4, in the nucleus to form the transactivation complex SMAD2/SMAD4. Found in a complex with SMAD3 and TRIM33 upon addition of TGF-beta. Identified in a complex that contains at least ZNF451, SMAD2, SMAD3 and SMAD4. Interacts (via the MH2 domain) with ZFYVE9; may form trimers with the SMAD4 co-SMAD. Interacts with TAZ/WWRT1. Interacts with FOXH1. Interacts with SNW1. Interacts with CREB-binding protein (CBP) and EP300. Interacts with SNON. Interacts with ALK4/ACVR1B. Interacts with SKOR1. Interacts with SKOR2. Interacts with PRDM16. Interacts (via MH2 domain) with LEMD3. Interacts with RBPMS. Interacts with WWP1. Interacts (dephosphorylated form, via the MH1 and MH2 domains) with RANBP3 (via its C-terminal R domain); the interaction results in the export of dephosphorylated SMAD3 out of the nucleus and termination of the TGF-beta signaling. Interacts with PDPK1 (via PH domain). Interacts with DAB2; the interactions are enhanced upon TGF-beta stimulation. Interacts with USP15. Interacts with PPP5C. Interacts with LDLRAD4 (via the SMAD interaction motif). Interacts (via MH2 domain) with PMEPA1 (via the SMAD interaction motif). Interacts with ZFHX3. Interacts with ZNF451. Interacts with SMURF2 when phosphorylated on Ser-465/467. Interacts with PPM1A. Interacts with TGF-beta. Interacts with TGFBR1. Interacts with TGIF. Interacts with SMAD3 and TRIM33. Interacts with ZNF580. Interacts with NEDD4L in response to TGF-beta. Interacts with HGS. Interacts with AIP1. Interacts with WWP1. Interacts with PML. Interacts weakly with ZNF8. Interacts (when phosphorylated) with RNF111; RNF111 acts as an enhancer of the transcriptional responses by mediating ubiquitination and degradation of SMAD2 inhibitors. Interacts with YAP1 (when phosphorylated at 'Ser-112'). Interacts when phosphorylated with IPO7; the interaction facilitates translocation of SMAD2 to the nucleus. Interacts with MTMR4; negatively regulates TGF-beta signaling through SMAD2 dephosphorylation and retention in endosomes. In response to TGF-beta, phosphorylated on the C-terminal SXS motif by TGF-beta and activin type 1 receptor kinases, phosphorylation declines progressively in a KMT5A-dependent manner. Phosphorylation in this motif is required for interaction with a number of proteins including SMURF2, SNON and SMAD4 in response to TGF-beta. Dephosphorylated in this motif by PPM1A leading to disruption of the SMAD2/3-SMAD4 complex, nuclear export and termination of the TGF-beta signaling. In response to decorin, the naturally occurring inhibitor of TGF-beta signaling, phosphorylated on Ser-240 by CaMK2. Phosphorylated by MAPK3 upon EGF stimulation; which increases transcriptional activity and stability, and is blocked by calmodulin. Phosphorylated by PDPK1. Post-translationally, in response to TGF-beta, ubiquitinated by NEDD4L; which promotes its degradation. Monoubiquitinated, leading to prevent DNA-binding. Deubiquitination by USP15 alleviates inhibition and promotes activation of TGF-beta target genes. Ubiquitinated by RNF111, leading to its degradation: only SMAD2 proteins that are 'in use' are targeted by RNF111, RNF111 playing a key role in activating SMAD2 and regulating its turnover. In terms of processing, acetylated on Lys-19 by coactivators in response to TGF-beta signaling, which increases transcriptional activity.

It localises to the cytoplasm. The protein localises to the nucleus. Functionally, receptor-regulated SMAD (R-SMAD) that is an intracellular signal transducer and transcriptional modulator activated by TGF-beta (transforming growth factor) and activin type 1 receptor kinases. Binds the TRE element in the promoter region of many genes that are regulated by TGF-beta and, on formation of the SMAD2/SMAD4 complex, activates transcription. Promotes TGFB1-mediated transcription of odontoblastic differentiation genes in dental papilla cells. Positively regulates PDPK1 kinase activity by stimulating its dissociation from the 14-3-3 protein YWHAQ which acts as a negative regulator. The protein is Mothers against decapentaplegic homolog 2 (Smad2) of Mus musculus (Mouse).